The sequence spans 173 residues: Ribosome maturation factor RimP (173 aa).

Belongs to the RimP family.

It localises to the cytoplasm. Its function is as follows. Required for maturation of 30S ribosomal subunits. The sequence is that of Ribosome maturation factor RimP from Chlorobium phaeobacteroides (strain DSM 266 / SMG 266 / 2430).